Reading from the N-terminus, the 530-residue chain is Alkali-sensitive linkage protein 1 (530 aa).

The first 18 residues, 1-18 (MRTTFATVALAFLSTVGA), serve as a signal peptide directing secretion. An N-linked (GlcNAc...) asparagine glycan is attached at Asn-55. The disordered stretch occupies residues 69–90 (SVTESSDDGASTALPTTSTESV). Asn-120 and Asn-128 each carry an N-linked (GlcNAc...) asparagine glycan.

It is found in the endoplasmic reticulum. The protein resides in the golgi apparatus. The protein localises to the secreted. Its subcellular location is the cell wall. The polypeptide is Alkali-sensitive linkage protein 1 (asl1) (Schizosaccharomyces pombe (strain 972 / ATCC 24843) (Fission yeast)).